The chain runs to 599 residues: ATP-dependent zinc metalloprotease FtsH 3 (599 aa).

The Cytoplasmic portion of the chain corresponds to 1–7 (MKYKKKN). The helical transmembrane segment at 8-28 (ILFITTIIVIYLAFLFNWLEI) threads the bilayer. Residues 29–128 (GIFKPKGESI…PFSWLLSIFS (100 aa)) are Extracellular-facing. The helical transmembrane segment at 129–149 (ILLNFINVLSSLVFTIYIFLA) threads the bilayer. Over 150 to 599 (IHRESGKLNS…IEQLVVNTKK (450 aa)) the chain is Cytoplasmic. 214–221 (GPPGTGKT) contributes to the ATP binding site. His436 contacts Zn(2+). Glu437 is a catalytic residue. Zn(2+) is bound by residues His440 and Asp512.

This sequence in the central section; belongs to the AAA ATPase family. In the C-terminal section; belongs to the peptidase M41 family. As to quaternary structure, homohexamer. Requires Zn(2+) as cofactor.

It is found in the cell membrane. In terms of biological role, acts as a processive, ATP-dependent zinc metallopeptidase for both cytoplasmic and membrane proteins. Plays a role in the quality control of integral membrane proteins. The chain is ATP-dependent zinc metalloprotease FtsH 3 from Phytoplasma mali (strain AT).